The following is a 147-amino-acid chain: Globin (147 aa).

N-acetylserine is present on S2. The Globin domain occupies 2–147 (SLSAAEADLA…IIDALKAAGK (146 aa)). Position 96 (H96) interacts with heme b.

This sequence belongs to the globin family. In terms of assembly, monomer.

The chain is Globin from Aplysia limacina (Sea hare).